A 201-amino-acid polypeptide reads, in one-letter code: Peptidyl-tRNA hydrolase (201 aa).

Tyr-15 lines the tRNA pocket. His-20 (proton acceptor) is an active-site residue. Tyr-66, Asn-68, and Asn-114 together coordinate tRNA.

It belongs to the PTH family. As to quaternary structure, monomer.

The protein localises to the cytoplasm. It catalyses the reaction an N-acyl-L-alpha-aminoacyl-tRNA + H2O = an N-acyl-L-amino acid + a tRNA + H(+). Its function is as follows. Hydrolyzes ribosome-free peptidyl-tRNAs (with 1 or more amino acids incorporated), which drop off the ribosome during protein synthesis, or as a result of ribosome stalling. In terms of biological role, catalyzes the release of premature peptidyl moieties from peptidyl-tRNA molecules trapped in stalled 50S ribosomal subunits, and thus maintains levels of free tRNAs and 50S ribosomes. This is Peptidyl-tRNA hydrolase from Burkholderia mallei (strain ATCC 23344).